A 376-amino-acid chain; its full sequence is C-type lectin domain family 4 member M (376 aa).

Residues methionine 1–glycine 49 lie on the Cytoplasmic side of the membrane. The Endocytosis signal signature appears at leucine 14–leucine 15. A helical; Signal-anchor for type II membrane protein transmembrane segment spans residues alanine 50–valine 70. Topologically, residues glutamine 71–glutamate 376 are extracellular. Residue asparagine 92 is glycosylated (N-linked (GlcNAc...) asparagine). 6 tandem repeats follow at residues lysine 108–serine 130, lysine 131–serine 153, lysine 154–serine 176, lysine 177–serine 199, lysine 200–serine 222, and lysine 223–cysteine 245. The 6 X approximate tandem repeats stretch occupies residues lysine 108 to proline 246. Disulfide bonds link cysteine 242-cysteine 372, cysteine 245-cysteine 256, cysteine 273-cysteine 366, and cysteine 345-cysteine 358. Residues phenylalanine 251–lysine 367 form the C-type lectin domain. The Ca(2+) site is built by glutamate 336, asparagine 338, serine 340, glutamate 343, asparagine 354, and aspartate 355. N-linked (GlcNAc...) asparagine glycosylation occurs at asparagine 338.

In terms of assembly, homotetramer.

Its subcellular location is the membrane. Functionally, probable pathogen-recognition receptor involved in peripheral immune surveillance in liver. May mediate the endocytosis of pathogens which are subsequently degraded in lysosomal compartments. Probably recognizes in a calcium-dependent manner high mannose N-linked oligosaccharides in a variety of pathogen antigens. Is a receptor for ICAM3, probably by binding to mannose-like carbohydrates. The chain is C-type lectin domain family 4 member M (CLEC4M) from Gorilla gorilla gorilla (Western lowland gorilla).